We begin with the raw amino-acid sequence, 443 residues long: MNCSDLFYADTNTENTLHQRTQLSEVILSKGIAKKNELIEFLRQELKEAFDCDVRFWLQGSYKSHTLIKPVDKFSSYDIDIGVYLFFDAENEGVDSKDVKETLRDALLSYCSINNEAKLQESKNACEGLKFSTFLTVDTPIYYKTDTKIKLATDKGWSDSDPKAIQDWITNYYKDKSDRALMKRLVRYFKAWVNVKWQNTGFKKIPSLAINVLVAQHMKQHVREDDCFIYTALSICEELESTLIVRNPLNNSNLISMPQDAECFAHQKLDELKQVCLSCIKSDDIKRGAHFSNLFQHYFPQISLDSATGSTGLPTVVNVPEISVCRYDKNGNHVETIITDRLTVNKGDSLTFTIRNHYDFNIYSSAQWTVRNIGSQANDANDIGHSVTGKPSESHKRGTSYTGSHTMECMILHNGAIIGFKTIHVIVKPARTVRRKTLKFWRA.

Residue Ser-61 coordinates ATP. Active-site residues include Asp-78 and Asp-80. Asp-80 contributes to the Mg(2+) binding site. Asn-124 is a binding site for ATP. Asp-138 is an active-site residue. Asp-138 lines the Mg(2+) pocket. Leu-208 is an ATP binding site.

The protein belongs to the CD-NTase family. B06 subfamily. Requires Mg(2+) as cofactor.

It carries out the reaction GTP + ATP = 3',3'-cGAMP + 2 diphosphate. The enzyme catalyses UTP + ATP = 3',3'-cUAMP + 2 diphosphate. The catalysed reaction is 2 ATP = 3',3'-c-di-AMP + 2 diphosphate. It catalyses the reaction 2 GTP = 3',3'-c-di-GMP + 2 diphosphate. It carries out the reaction UTP + GTP = 3',3'-cGMP-UMP + 2 diphosphate. In terms of biological role, cyclic nucleotide synthase (second messenger synthase) of a CBASS antivirus system. CBASS (cyclic oligonucleotide-based antiphage signaling system) provides immunity against bacteriophages. The CD-NTase protein (CdnB, this protein) synthesizes cyclic nucleotides in response to infection; these serve as specific second messenger signals. The signals activate a diverse range of effectors, leading to bacterial cell death and thus abortive phage infection. The effector protein for this system is membrane protein Cap15. Functionally, catalyzes the synthesis of 3',3'-cyclic GMP-AMP (3'3'-cGAMP) from GTP and ATP, a second messenger in cell signal transduction. Also makes cyclic UMP-AMP, cyclic UMP-GMP, cyclic di-AMP and cyclic-di-GMP. Its function is as follows. Protects E.coli against phage infection. When the CBASS operon (cdnB-cap15) is introduced in E.coli MG1655 there is about 100-fold protection against phage T2 and about 10-fold protection against phage T5 and T6. The polypeptide is Cyclic GMP-AMP synthase (Escherichia albertii).